Reading from the N-terminus, the 464-residue chain is Histidine--tRNA ligase (464 aa).

Belongs to the class-II aminoacyl-tRNA synthetase family. In terms of assembly, homodimer.

The protein resides in the cytoplasm. The catalysed reaction is tRNA(His) + L-histidine + ATP = L-histidyl-tRNA(His) + AMP + diphosphate + H(+). In Stenotrophomonas maltophilia (strain K279a), this protein is Histidine--tRNA ligase.